A 299-amino-acid polypeptide reads, in one-letter code: 4-hydroxybenzoate octaprenyltransferase (299 aa).

The next 8 helical transmembrane spans lie at 33–53, 56–76, 105–125, 151–171, 180–200, 214–234, 247–267, and 278–298; these read VGFL…ADGV, WWTL…GCVI, NALL…LTMN, LPQV…FAAI, WLLY…YAMV, AILF…LMLL, HTYW…FIIA, and AFMH…LATT.

It belongs to the UbiA prenyltransferase family. Mg(2+) is required as a cofactor.

The protein resides in the cell inner membrane. It catalyses the reaction all-trans-octaprenyl diphosphate + 4-hydroxybenzoate = 4-hydroxy-3-(all-trans-octaprenyl)benzoate + diphosphate. The protein operates within cofactor biosynthesis; ubiquinone biosynthesis. In terms of biological role, catalyzes the prenylation of para-hydroxybenzoate (PHB) with an all-trans polyprenyl group. Mediates the second step in the final reaction sequence of ubiquinone-8 (UQ-8) biosynthesis, which is the condensation of the polyisoprenoid side chain with PHB, generating the first membrane-bound Q intermediate 3-octaprenyl-4-hydroxybenzoate. The sequence is that of 4-hydroxybenzoate octaprenyltransferase from Xylella fastidiosa (strain M23).